The chain runs to 64 residues: Sperm protamine P1 (64 aa).

The disordered stretch occupies residues 1-64; sequence MARYRHSRSR…SRRRRRRYYY (64 aa).

Belongs to the protamine P1 family. Testis.

Its subcellular location is the nucleus. It localises to the chromosome. In terms of biological role, protamines substitute for histones in the chromatin of sperm during the haploid phase of spermatogenesis. They compact sperm DNA into a highly condensed, stable and inactive complex. This chain is Sperm protamine P1 (PRM1), found in Hypsiprymnodon moschatus (Musky rat kangaroo).